The sequence spans 82 residues: Immediate early response 3-interacting protein 1 (82 aa).

The next 2 helical transmembrane spans lie at 2-22 (AFTL…IAVL) and 62-82 (VMRV…LLFG).

This sequence belongs to the YOS1 family.

The protein localises to the endoplasmic reticulum membrane. Its function is as follows. Regulator of endoplasmic reticulum secretion that acts as a key determinant of brain size. Required for secretion of extracellular matrix proteins. Required for correct brain development by depositing sufficient extracellular matrix proteins for tissue integrity and the proliferation of neural progenitors. Acts as a regulator of the unfolded protein response (UPR). In Mus musculus (Mouse), this protein is Immediate early response 3-interacting protein 1.